Consider the following 601-residue polypeptide: Proteasome-associated ATPase (601 aa).

Residues 1-15 (MSGPRSGSGSGGSTG) are compositionally biased toward gly residues. A disordered region spans residues 1–29 (MSGPRSGSGSGGSTGRPGDADSQRSAYEK). Residues 18–29 (GDADSQRSAYEK) show a composition bias toward basic and acidic residues. Residues 19-106 (DADSQRSAYE…LKEEVDRLAQ (88 aa)) are a coiled coil. 289–294 (GCGKTL) contacts ATP. The segment at 600–601 (YL) is docks into pockets in the proteasome alpha-ring.

Belongs to the AAA ATPase family. In terms of assembly, homohexamer. Assembles into a hexameric ring structure that caps the 20S proteasome core. Strongly interacts with the prokaryotic ubiquitin-like protein Pup through a hydrophobic interface; the interacting region of ARC lies in its N-terminal coiled-coil domain. There is one Pup binding site per ARC hexamer ring. Upon ATP-binding, the C-terminus of ARC interacts with the alpha-rings of the proteasome core, possibly by binding to the intersubunit pockets.

It participates in protein degradation; proteasomal Pup-dependent pathway. In terms of biological role, ATPase which is responsible for recognizing, binding, unfolding and translocation of pupylated proteins into the bacterial 20S proteasome core particle. May be essential for opening the gate of the 20S proteasome via an interaction with its C-terminus, thereby allowing substrate entry and access to the site of proteolysis. Thus, the C-termini of the proteasomal ATPase may function like a 'key in a lock' to induce gate opening and therefore regulate proteolysis. The protein is Proteasome-associated ATPase of Parafrankia sp. (strain EAN1pec).